The following is a 193-amino-acid chain: Potassium-transporting ATPase KdpC subunit (193 aa).

A helical membrane pass occupies residues 7 to 27; it reads PALVLFAALTLLTGVAYPLAV.

It belongs to the KdpC family. The system is composed of three essential subunits: KdpA, KdpB and KdpC.

Its subcellular location is the cell inner membrane. Its function is as follows. Part of the high-affinity ATP-driven potassium transport (or Kdp) system, which catalyzes the hydrolysis of ATP coupled with the electrogenic transport of potassium into the cytoplasm. This subunit acts as a catalytic chaperone that increases the ATP-binding affinity of the ATP-hydrolyzing subunit KdpB by the formation of a transient KdpB/KdpC/ATP ternary complex. This Rhodospirillum rubrum (strain ATCC 11170 / ATH 1.1.1 / DSM 467 / LMG 4362 / NCIMB 8255 / S1) protein is Potassium-transporting ATPase KdpC subunit.